Here is a 766-residue protein sequence, read N- to C-terminus: 5-methyltetrahydropteroyltriglutamate--homocysteine methyltransferase (766 aa).

Residues 16–19 (RELK) and lysine 119 each bind 5-methyltetrahydropteroyltri-L-glutamate. L-homocysteine-binding positions include 440–442 (IGS) and glutamate 493. L-methionine-binding positions include 440-442 (IGS) and glutamate 493. 5-methyltetrahydropteroyltri-L-glutamate contacts are provided by residues 524–525 (RC) and tryptophan 570. An L-homocysteine-binding site is contributed by aspartate 608. Residue aspartate 608 coordinates L-methionine. Residue glutamate 614 coordinates 5-methyltetrahydropteroyltri-L-glutamate. Zn(2+)-binding residues include histidine 650, cysteine 652, and glutamate 674. The Proton donor role is filled by histidine 703. A Zn(2+)-binding site is contributed by cysteine 735.

Belongs to the vitamin-B12 independent methionine synthase family. Requires Zn(2+) as cofactor.

The enzyme catalyses 5-methyltetrahydropteroyltri-L-glutamate + L-homocysteine = tetrahydropteroyltri-L-glutamate + L-methionine. It participates in amino-acid biosynthesis; L-methionine biosynthesis via de novo pathway; L-methionine from L-homocysteine (MetE route): step 1/1. In terms of biological role, catalyzes the transfer of a methyl group from 5-methyltetrahydrofolate to homocysteine resulting in methionine formation. In Pseudomonas aeruginosa (strain LESB58), this protein is 5-methyltetrahydropteroyltriglutamate--homocysteine methyltransferase.